The following is a 684-amino-acid chain: UvrABC system protein B (684 aa).

One can recognise a Helicase ATP-binding domain in the interval 32–420; that stretch reads DGVLRGDRWQ…GGVVVEQLIR (389 aa). Residue 45 to 52 coordinates ATP; the sequence is GVTGSGKT. The short motif at 98–121 is the Beta-hairpin element; it reads YYDFYQPEAYIPSLDKYIAKDLKI. Positions 437–603 constitute a Helicase C-terminal domain; the sequence is QIDHLLARIR…SIIKSVDQVL (167 aa). The UVR domain maps to 643-678; sequence MLMVAEMNAEMQKAAEQTDYEKAAYLRDEILMLQER.

Belongs to the UvrB family. In terms of assembly, forms a heterotetramer with UvrA during the search for lesions. Interacts with UvrC in an incision complex.

The protein resides in the cytoplasm. Its function is as follows. The UvrABC repair system catalyzes the recognition and processing of DNA lesions. A damage recognition complex composed of 2 UvrA and 2 UvrB subunits scans DNA for abnormalities. Upon binding of the UvrA(2)B(2) complex to a putative damaged site, the DNA wraps around one UvrB monomer. DNA wrap is dependent on ATP binding by UvrB and probably causes local melting of the DNA helix, facilitating insertion of UvrB beta-hairpin between the DNA strands. Then UvrB probes one DNA strand for the presence of a lesion. If a lesion is found the UvrA subunits dissociate and the UvrB-DNA preincision complex is formed. This complex is subsequently bound by UvrC and the second UvrB is released. If no lesion is found, the DNA wraps around the other UvrB subunit that will check the other stand for damage. This Chlorobaculum tepidum (strain ATCC 49652 / DSM 12025 / NBRC 103806 / TLS) (Chlorobium tepidum) protein is UvrABC system protein B.